The sequence spans 717 residues: Fatty acid oxidation complex subunit alpha (717 aa).

The segment at 1-189 (MIYQSPTIEV…KVGAIDAVVA (189 aa)) is enoyl-CoA hydratase/isomerase. Aspartate 296 is a substrate binding site. The tract at residues 311 to 717 (KKVNSAAVLG…ANNGSYYQQA (407 aa)) is 3-hydroxyacyl-CoA dehydrogenase. NAD(+)-binding positions include methionine 324, aspartate 343, 400–402 (VVE), lysine 407, and serine 429. Catalysis depends on histidine 450, which acts as the For 3-hydroxyacyl-CoA dehydrogenase activity. Asparagine 453 contacts NAD(+). Asparagine 500 and tyrosine 660 together coordinate substrate.

In the N-terminal section; belongs to the enoyl-CoA hydratase/isomerase family. The protein in the C-terminal section; belongs to the 3-hydroxyacyl-CoA dehydrogenase family. Heterotetramer of two alpha chains (FadB) and two beta chains (FadA).

The catalysed reaction is a (3S)-3-hydroxyacyl-CoA + NAD(+) = a 3-oxoacyl-CoA + NADH + H(+). It catalyses the reaction a (3S)-3-hydroxyacyl-CoA = a (2E)-enoyl-CoA + H2O. The enzyme catalyses a 4-saturated-(3S)-3-hydroxyacyl-CoA = a (3E)-enoyl-CoA + H2O. It carries out the reaction (3S)-3-hydroxybutanoyl-CoA = (3R)-3-hydroxybutanoyl-CoA. The catalysed reaction is a (3Z)-enoyl-CoA = a 4-saturated (2E)-enoyl-CoA. It catalyses the reaction a (3E)-enoyl-CoA = a 4-saturated (2E)-enoyl-CoA. It functions in the pathway lipid metabolism; fatty acid beta-oxidation. Involved in the aerobic and anaerobic degradation of long-chain fatty acids via beta-oxidation cycle. Catalyzes the formation of 3-oxoacyl-CoA from enoyl-CoA via L-3-hydroxyacyl-CoA. It can also use D-3-hydroxyacyl-CoA and cis-3-enoyl-CoA as substrate. The polypeptide is Fatty acid oxidation complex subunit alpha (Shewanella halifaxensis (strain HAW-EB4)).